The sequence spans 201 residues: Probable nicotinate-nucleotide adenylyltransferase (201 aa).

Residues 182–201 (GPESSQSATSIRERGGWSLR) form a disordered region. The segment covering 192-201 (IRERGGWSLR) has biased composition (basic and acidic residues).

Belongs to the NadD family.

It catalyses the reaction nicotinate beta-D-ribonucleotide + ATP + H(+) = deamido-NAD(+) + diphosphate. It functions in the pathway cofactor biosynthesis; NAD(+) biosynthesis; deamido-NAD(+) from nicotinate D-ribonucleotide: step 1/1. Functionally, catalyzes the reversible adenylation of nicotinate mononucleotide (NaMN) to nicotinic acid adenine dinucleotide (NaAD). The polypeptide is Probable nicotinate-nucleotide adenylyltransferase (Parvibaculum lavamentivorans (strain DS-1 / DSM 13023 / NCIMB 13966)).